Consider the following 153-residue polypeptide: Small ribosomal subunit protein uS5c (153 aa).

Residues 11–74 (WQERVIQIRR…VDAKKQLINI (64 aa)) form the S5 DRBM domain.

The protein belongs to the universal ribosomal protein uS5 family. Part of the 30S ribosomal subunit. Contacts protein S4.

Its subcellular location is the plastid. It localises to the chloroplast. In terms of biological role, with S4 and S12 plays an important role in translational accuracy. The protein is Small ribosomal subunit protein uS5c (rps5) of Cyanidioschyzon merolae (strain NIES-3377 / 10D) (Unicellular red alga).